Here is a 707-residue protein sequence, read N- to C-terminus: MSIFNKVTKSFQWGQHKVTMETGEVARQASGAVVVDMDGTVVLATVVAKTDAKPGQDFFPLTVDYLEKTYAAGRIPGSFFKREGRPSEFETLTSRLIDRPIRPLFPEGFFNEVQVVIHVLSLNPEVEGDIPALIASSAALSISGIPFNGPIGAARVAYVDGQYVLNPGKTQLKDSKMDLVVAGTEAAVLMVESEAQQLSEEIMLGAVVFGHEQANIAINAIHELVRDAGKPVWDWQAPAKDEPLIAKVNELAGAKLQAAYQIRSKQARTQACRVAYADVMAALKADGVAFDGVTVEGMLFDIEAKIVRSQILAGEPRIDGRDTRTVRAIEIRNSVLPRTHGSALFTRGETQALVVTTLGTERDAQRIDALSGDYEDRFMLHYNMPPFATGETGRVGSPKRREIGHGRLAKRALIAVLPTKEEFPYTMRVVSEITESNGSSSMASVCGGCLSLMDAGVPMKAHVAGIAMGLIKEENRFAVLTDILGDEDHLGDMDFKVAGTTFGITALQMDIKIQGITKEIMQVALAQAKEARMHILGKMQEAMGEAKAEVSDFAPRLYVMKINPEKIRDVIGKGGAVIRALTEETGTQINIEEDGTITIASNDSAKADEAKRRIAEITAEVEIGKVYEGAITKILDFGALVNLLPGKDGLLHISQIAHERVEKVTDYLSEGQIVKVKVLETDEKGRVKLSMKALLDRPAQNQDQDRG.

Mg(2+) is bound by residues aspartate 488 and aspartate 494. In terms of domain architecture, KH spans 555-614 (PRLYVMKINPEKIRDVIGKGGAVIRALTEETGTQINIEEDGTITIASNDSAKADEAKRRI). An S1 motif domain is found at 624–692 (GKVYEGAITK…EKGRVKLSMK (69 aa)).

Belongs to the polyribonucleotide nucleotidyltransferase family. Mg(2+) is required as a cofactor.

It is found in the cytoplasm. The enzyme catalyses RNA(n+1) + phosphate = RNA(n) + a ribonucleoside 5'-diphosphate. In terms of biological role, involved in mRNA degradation. Catalyzes the phosphorolysis of single-stranded polyribonucleotides processively in the 3'- to 5'-direction. The protein is Polyribonucleotide nucleotidyltransferase of Polaromonas sp. (strain JS666 / ATCC BAA-500).